We begin with the raw amino-acid sequence, 24 residues long: Protein YahV (24 aa).

The helical transmembrane segment at 4 to 24 threads the bilayer; that stretch reads ILLNVLNIVFIGIAIILVIIC.

Its subcellular location is the cell inner membrane. This chain is Protein YahV, found in Escherichia coli (strain K12).